The following is a 345-amino-acid chain: Ananain (345 aa).

The signal sequence occupies residues 1 to 24 (MTSKVQLVFLFLFLCVMWASPSAA). Positions 25 to 122 (SCDEPSDPMM…VSFDDVDISS (98 aa)) are cleaved as a propeptide — activation peptide. 3 disulfides stabilise this stretch: Cys-144-Cys-184, Cys-178-Cys-217, and Cys-273-Cys-325. Cys-147 is an active-site residue. Position 147 (Cys-147) interacts with E64. Active-site residues include His-279 and Asn-300.

As to expression, stem (at protein level).

It catalyses the reaction Hydrolysis of proteins with broad specificity for peptide bonds. Best reported small molecule substrate Bz-Phe-Val-Arg-|-NHMec, but broader specificity than fruit bromelain.. Strongly inhibited by chicken egg-white cystatin. Inhibited by iodoacetamide and the active-site-directed inhibitor E64 (L-trans-epoxysuccinyl-leucylamide-(4-guanido)-butane). Its function is as follows. Cysteine protease. Displays a high level of diversity in substrate specificity at the P1-P1' cleavage site. A hydrophilic P1 residue is preferred, with Gln or Arg strongly preferred. Favors an Ile/Leu residue at the P2 position of substrates, with an overall higher preference for Leu. The optimal tripeptide for cleavage is Pro-Leu-Gln, with cleavage occurring after the Gln residue. Another optimal tripeptide is Val-Leu-Arg, which may imply that a hydrophobic residue at the P3 position of substrates is preferred. The chain is Ananain from Ananas comosus (Pineapple).